Reading from the N-terminus, the 533-residue chain is D-2-hydroxyglutarate dehydrogenase, mitochondrial (533 aa).

The transit peptide at 1–55 (MGLFQKCSRLSLRSSYMWSVCPQYSIAVTARETPDRALIVHWTQHRDVHNSRRLG) directs the protein to the mitochondrion. The FAD-binding PCMH-type domain occupies 107 to 286 (VQGSSDVLLR…TAVSILCPRK (180 aa)). (R)-2-hydroxyglutarate is bound by residues Arg397, Thr401, and Lys412. Arg397 is a binding site for (R)-lactate. Residues Arg397, Thr401, and Lys412 each coordinate (R)-malate. Zn(2+)-binding residues include His445 and His452. Asn454 lines the (R)-2-hydroxyglutarate pocket. Residue Glu486 participates in Zn(2+) binding. Residue His487 coordinates (R)-2-hydroxyglutarate. Position 487 (His487) interacts with (R)-lactate. (R)-malate is bound at residue His487.

This sequence belongs to the FAD-binding oxidoreductase/transferase type 4 family. The cofactor is FAD.

It localises to the mitochondrion. The enzyme catalyses (R)-2-hydroxyglutarate + A = 2-oxoglutarate + AH2. The catalysed reaction is (R)-malate + A = oxaloacetate + AH2. Functionally, catalyzes the oxidation of D-2-hydroxyglutarate (D-2-HG) to alpha-ketoglutarate. Also catalyzes the oxidation of other D-2-hydroxyacids, such as D-malate (D-MAL) and D-lactate (D-LAC). Exhibits high activities towards D-2-HG and D-MAL but a very weak activity towards D-LAC. In Danio rerio (Zebrafish), this protein is D-2-hydroxyglutarate dehydrogenase, mitochondrial (d2hgdh).